The primary structure comprises 1211 residues: DNA-directed RNA polymerase subunit beta' (1211 aa).

Zn(2+) is bound by residues Cys-60, Cys-62, Cys-75, and Cys-78. Mg(2+) is bound by residues Asp-449, Asp-451, and Asp-453. The Zn(2+) site is built by Cys-818, Cys-892, Cys-899, and Cys-902.

Belongs to the RNA polymerase beta' chain family. In terms of assembly, the RNAP catalytic core consists of 2 alpha, 1 beta, 1 beta' and 1 omega subunit. When a sigma factor is associated with the core the holoenzyme is formed, which can initiate transcription. It depends on Mg(2+) as a cofactor. Zn(2+) serves as cofactor.

It catalyses the reaction RNA(n) + a ribonucleoside 5'-triphosphate = RNA(n+1) + diphosphate. Functionally, DNA-dependent RNA polymerase catalyzes the transcription of DNA into RNA using the four ribonucleoside triphosphates as substrates. This chain is DNA-directed RNA polymerase subunit beta', found in Limosilactobacillus reuteri (strain DSM 20016) (Lactobacillus reuteri).